The sequence spans 168 residues: Photosystem I assembly protein Ycf3 (168 aa).

TPR repeat units lie at residues 35–68, 72–105, and 120–153; these read AFTY…EIDP, SYIL…NPFL, and GEEA…TPGN.

The protein belongs to the Ycf3 family.

Its subcellular location is the plastid. It is found in the chloroplast thylakoid membrane. Its function is as follows. Essential for the assembly of the photosystem I (PSI) complex. May act as a chaperone-like factor to guide the assembly of the PSI subunits. The protein is Photosystem I assembly protein Ycf3 of Nuphar advena (Common spatterdock).